The sequence spans 104 residues: Nucleoid-associated protein Ccon26_18480 (104 aa).

Residues 16–34 show a composition bias toward basic and acidic residues; it reads DVQKQAKQMEEESKNKEFG. The tract at residues 16 to 38 is disordered; the sequence is DVQKQAKQMEEESKNKEFGAKSG.

It belongs to the YbaB/EbfC family. In terms of assembly, homodimer.

It localises to the cytoplasm. The protein resides in the nucleoid. In terms of biological role, binds to DNA and alters its conformation. May be involved in regulation of gene expression, nucleoid organization and DNA protection. This is Nucleoid-associated protein Ccon26_18480 from Campylobacter concisus (strain 13826).